A 362-amino-acid chain; its full sequence is MILMAAPMNSITDISGIQVGHYHRLDPDASLGAGWACGVTVVLTPPGTVGAVDCRGGVPGTRETDLLDPANSVRFVDAVLLAGGSAYGLAAADGVMRWLEEHERGVVMLGGVVPIVPGAVIFDLSVGDFHCRPTAEFGYLACQAAYDAAVGGQDATVAVGTVGAGVGARAGVLKGGVGTASITLESGPTVGAVVVVNSVGDVVDRATGLPWMTDLIDEFALRPPSPEQIAGFAQLKSPLSALNTTIGVVATDATLSPAACQRVAMAAQDGLARTIRPAHTALDGDTVFALATGAVEATATADVPVAMSPETGLITEVGAAADDCLARAVLVAVLAAESVAGIPTYCGMFPGAFGTTIGGGNR.

The next 7 helical transmembrane spans lie at glycine 32–valine 52, phenylalanine 75–valine 95, valine 106–valine 126, alanine 148–alanine 168, glycine 176–valine 196, valine 287–methionine 307, and valine 329–phenylalanine 349.

This sequence belongs to the peptidase S58 family.

Its subcellular location is the cell membrane. Its function is as follows. Aminopeptidase. This is an uncharacterized protein from Mycobacterium leprae (strain TN).